The sequence spans 190 residues: Putative cyclic ADP-D-ribose synthase ThsB (190 aa).

The protein belongs to the Thoeris B TIR-like family. In terms of assembly, homodimer.

It is found in the cytoplasm. Activated upon phage infection. Functionally, TIR-like domain-containing component of the Thoeris antiviral defense system, composed of ThsA and ThsB. Expression of ThsA and ThsB in B.subtilis (strain BEST7003) confers resistance to phages SBSphiC, SBSphiJ and SPO1. Phage infection activates this protein, generating a signal molecule that in turn activates ThsA. In terms of biological role, probably hydrolyzes NAD(+) to make a cyclic ADP-D-ribose (cADPR) signaling molecule; might make 3'cADPR. The chain is Putative cyclic ADP-D-ribose synthase ThsB from Bacillus amyloliquefaciens (strain Y2) (Bacillus amyloliquefaciens subsp. plantarum (strain B9601-Y2)).